Here is a 32-residue protein sequence, read N- to C-terminus: U3-ctenitoxin-Pk1a (32 aa).

3 cysteine pairs are disulfide-bonded: Cys-3–Cys-17, Cys-10–Cys-21, and Cys-16–Cys-30.

The protein belongs to the neurotoxin 17 (21C2) family. Expressed by the venom gland.

It is found in the secreted. Functionally, may act as a neurotoxin. The protein is U3-ctenitoxin-Pk1a of Phoneutria keyserlingi (Brazilian wandering spider).